Here is a 96-residue protein sequence, read N- to C-terminus: Fluoride-specific ion channel FluC 1 (96 aa).

2 consecutive transmembrane segments (helical) span residues 4–24 (LIQG…RLAL) and 26–46 (LWLG…AFLM). Na(+)-binding residues include Gly-61 and Thr-64. Residues 69–89 (MMLNDVSFYFFTAVGCILAWL) form a helical membrane-spanning segment.

Belongs to the fluoride channel Fluc/FEX (TC 1.A.43) family.

It localises to the cell membrane. It carries out the reaction fluoride(in) = fluoride(out). With respect to regulation, na(+) is not transported, but it plays an essential structural role and its presence is essential for fluoride channel function. In terms of biological role, fluoride-specific ion channel. Important for reducing fluoride concentration in the cell, thus reducing its toxicity. The chain is Fluoride-specific ion channel FluC 1 from Corynebacterium glutamicum (strain ATCC 13032 / DSM 20300 / JCM 1318 / BCRC 11384 / CCUG 27702 / LMG 3730 / NBRC 12168 / NCIMB 10025 / NRRL B-2784 / 534).